Consider the following 323-residue polypeptide: Beta-ketoacyl-[acyl-carrier-protein] synthase III (323 aa).

Active-site residues include Cys-112 and His-250. Residues 251-255 form an ACP-binding region; sequence QANQR. The active site involves Asn-280.

This sequence belongs to the thiolase-like superfamily. FabH family. As to quaternary structure, homodimer.

The protein resides in the cytoplasm. The enzyme catalyses malonyl-[ACP] + acetyl-CoA + H(+) = 3-oxobutanoyl-[ACP] + CO2 + CoA. It participates in lipid metabolism; fatty acid biosynthesis. In terms of biological role, catalyzes the condensation reaction of fatty acid synthesis by the addition to an acyl acceptor of two carbons from malonyl-ACP. Catalyzes the first condensation reaction which initiates fatty acid synthesis and may therefore play a role in governing the total rate of fatty acid production. Possesses both acetoacetyl-ACP synthase and acetyl transacylase activities. Its substrate specificity determines the biosynthesis of branched-chain and/or straight-chain of fatty acids. This is Beta-ketoacyl-[acyl-carrier-protein] synthase III from Oenococcus oeni (strain ATCC BAA-331 / PSU-1).